Consider the following 74-residue polypeptide: uncharacterized protein (74 aa).

A helical transmembrane segment spans residues 15–32 (FLHALTVTFLSDIFVWLV).

Its subcellular location is the membrane. This is an uncharacterized protein from Saccharomyces cerevisiae (strain ATCC 204508 / S288c) (Baker's yeast).